A 313-amino-acid chain; its full sequence is N-acetyl-gamma-glutamyl-phosphate reductase 2 (313 aa).

Residue C117 is part of the active site.

It belongs to the NAGSA dehydrogenase family. Type 2 subfamily.

The protein localises to the cytoplasm. The enzyme catalyses N-acetyl-L-glutamate 5-semialdehyde + phosphate + NADP(+) = N-acetyl-L-glutamyl 5-phosphate + NADPH + H(+). It participates in amino-acid biosynthesis; L-arginine biosynthesis; N(2)-acetyl-L-ornithine from L-glutamate: step 3/4. Catalyzes the NADPH-dependent reduction of N-acetyl-5-glutamyl phosphate to yield N-acetyl-L-glutamate 5-semialdehyde. The protein is N-acetyl-gamma-glutamyl-phosphate reductase 2 of Pseudomonas putida (strain ATCC 47054 / DSM 6125 / CFBP 8728 / NCIMB 11950 / KT2440).